Consider the following 259-residue polypeptide: Phosphatidylglycerol--prolipoprotein diacylglyceryl transferase (259 aa).

4 helical membrane-spanning segments follow: residues 16–36 (FAIS…WFYA), 55–75 (FITY…VLLY), 92–112 (QGGM…YLFC), and 117–137 (VNFL…LFLG). An a 1,2-diacyl-sn-glycero-3-phospho-(1'-sn-glycerol)-binding site is contributed by Arg138. The next 3 helical transmembrane spans lie at 172–192 (QLYE…YATF), 201–221 (ALNL…IEIF), and 228–248 (IGFI…MLIL).

It belongs to the Lgt family.

The protein localises to the cell inner membrane. The catalysed reaction is L-cysteinyl-[prolipoprotein] + a 1,2-diacyl-sn-glycero-3-phospho-(1'-sn-glycerol) = an S-1,2-diacyl-sn-glyceryl-L-cysteinyl-[prolipoprotein] + sn-glycerol 1-phosphate + H(+). Its pathway is protein modification; lipoprotein biosynthesis (diacylglyceryl transfer). Functionally, catalyzes the transfer of the diacylglyceryl group from phosphatidylglycerol to the sulfhydryl group of the N-terminal cysteine of a prolipoprotein, the first step in the formation of mature lipoproteins. The protein is Phosphatidylglycerol--prolipoprotein diacylglyceryl transferase of Rickettsia canadensis (strain McKiel).